Here is a 413-residue protein sequence, read N- to C-terminus: Arginine biosynthesis bifunctional protein ArgJ, mitochondrial (413 aa).

Positions 168, 194, 205, and 292 each coordinate substrate. T205 functions as the Nucleophile in the catalytic mechanism.

It belongs to the ArgJ family. In terms of assembly, heterodimer of an alpha and a beta chain. Post-translationally, the alpha and beta chains are autoproteolytically processed from a single precursor protein within the mitochondrion.

The protein localises to the mitochondrion matrix. It carries out the reaction N(2)-acetyl-L-ornithine + L-glutamate = N-acetyl-L-glutamate + L-ornithine. The catalysed reaction is L-glutamate + acetyl-CoA = N-acetyl-L-glutamate + CoA + H(+). The protein operates within amino-acid biosynthesis; L-arginine biosynthesis; L-ornithine and N-acetyl-L-glutamate from L-glutamate and N(2)-acetyl-L-ornithine (cyclic): step 1/1. It participates in amino-acid biosynthesis; L-arginine biosynthesis; N(2)-acetyl-L-ornithine from L-glutamate: step 1/4. Catalyzes two activities which are involved in the cyclic version of arginine biosynthesis: the synthesis of acetylglutamate from glutamate and acetyl-CoA, and of ornithine by transacetylation between acetylornithine and glutamate. This is Arginine biosynthesis bifunctional protein ArgJ, mitochondrial from Clavispora lusitaniae (strain ATCC 42720) (Yeast).